The following is an 84-amino-acid chain: Small ribosomal subunit protein uS17 (84 aa).

The protein belongs to the universal ribosomal protein uS17 family. In terms of assembly, part of the 30S ribosomal subunit.

In terms of biological role, one of the primary rRNA binding proteins, it binds specifically to the 5'-end of 16S ribosomal RNA. The sequence is that of Small ribosomal subunit protein uS17 from Vibrio vulnificus (strain CMCP6).